The chain runs to 122 residues: Large ribosomal subunit protein uL18 (122 aa).

Basic residues predominate over residues 1–20 (MLKKVSKNTNRQGRHQRVRN). The tract at residues 1–22 (MLKKVSKNTNRQGRHQRVRNKI) is disordered.

The protein belongs to the universal ribosomal protein uL18 family. Part of the 50S ribosomal subunit; part of the 5S rRNA/L5/L18/L25 subcomplex. Contacts the 5S and 23S rRNAs.

In terms of biological role, this is one of the proteins that bind and probably mediate the attachment of the 5S RNA into the large ribosomal subunit, where it forms part of the central protuberance. The chain is Large ribosomal subunit protein uL18 from Alkaliphilus metalliredigens (strain QYMF).